A 497-amino-acid chain; its full sequence is Nuclear pore complex protein npp-16 (497 aa).

3 disordered regions span residues 76–95, 210–308, and 359–379; these read VPRR…APRK, TKKS…SAPK, and MENQ…GEYV. 2 stretches are compositionally biased toward basic and acidic residues: residues 231–240 and 250–260; these read KDGDKPKETP and KPAEPSEEPKA. Residues 390-497 are ranBD1; sequence EPDAVLSSKV…FTDKILEVAV (108 aa).

In terms of assembly, interacts with importin beta imb-1. Interacts with DNA-directed RNA polymerase III subunit rpc-1. Interacts with TATA-box-binding protein tbp-1. Interacts with GTF3C5 homolog tftc-5. Interacts with GTF3C3 homolog tftc-3.

The protein localises to the nucleus. Its subcellular location is the nuclear pore complex. It is found in the nucleus membrane. Component of the nuclear pore complex. Plays a direct role in nuclear protein import. Required for anoxia-induced prophase arrest; may function in concert with cdk-1 to arrest prophase blastomeres in response to anoxia. The sequence is that of Nuclear pore complex protein npp-16 from Caenorhabditis elegans.